The sequence spans 116 residues: Large ribosomal subunit protein uL24 (116 aa).

It belongs to the universal ribosomal protein uL24 family. Part of the 50S ribosomal subunit.

Functionally, one of two assembly initiator proteins, it binds directly to the 5'-end of the 23S rRNA, where it nucleates assembly of the 50S subunit. In terms of biological role, located at the polypeptide exit tunnel on the outside of the subunit. The protein is Large ribosomal subunit protein uL24 of Methanothrix thermoacetophila (strain DSM 6194 / JCM 14653 / NBRC 101360 / PT) (Methanosaeta thermophila).